We begin with the raw amino-acid sequence, 183 residues long: Capsid protein (183 aa).

The segment at 136–183 is disordered; that stretch reads NAPILSTLPETTVVRRRGRSPRRRTPSPRRRRSQSPRRRRSQSRESQC. Positions 149–176 are enriched in basic residues; the sequence is VRRRGRSPRRRTPSPRRRRSQSPRRRRS. Phosphoserine; by host occurs at positions 155, 162, and 170. The stretch at 155-161 is one 1; half-length repeat; that stretch reads SPRRRTP. A 3 X 8 AA repeats of S-P-R-R-R-[PR]-S-Q region spans residues 155–177; the sequence is SPRRRTPSPRRRRSQSPRRRRSQ. Positions 158-175 match the Bipartite nuclear localization signal motif; it reads RRTPSPRRRRSQSPRRRR. 2 tandem repeats follow at residues 162–169 and 170–177. The tract at residues 177–183 is RNA binding; it reads QSRESQC.

The protein belongs to the orthohepadnavirus core antigen family. As to quaternary structure, homodimerizes, then multimerizes. Interacts with cytosol exposed regions of viral L glycoprotein present in the reticulum-to-Golgi compartment. Interacts with human FLNB. Phosphorylated form interacts with host importin alpha; this interaction depends on the exposure of the NLS, which itself depends upon genome maturation and/or phosphorylation of the capsid protein. Interacts with host NUP153. Post-translationally, phosphorylated by host SRPK1, SRPK2, and maybe protein kinase C or GAPDH. Phosphorylation is critical for pregenomic RNA packaging. Protein kinase C phosphorylation is stimulated by HBx protein and may play a role in transport of the viral genome to the nucleus at the late step during the viral replication cycle.

The protein localises to the virion. Its subcellular location is the host cytoplasm. Functionally, self assembles to form an icosahedral capsid. Most capsids appear to be large particles with an icosahedral symmetry of T=4 and consist of 240 copies of capsid protein, though a fraction forms smaller T=3 particles consisting of 180 capsid proteins. Entering capsids are transported along microtubules to the nucleus. Phosphorylation of the capsid is thought to induce exposure of nuclear localization signal in the C-terminal portion of the capsid protein that allows binding to the nuclear pore complex via the importin (karyopherin-) alpha and beta. Capsids are imported in intact form through the nuclear pore into the nuclear basket, where it probably binds NUP153. Only capsids that contain the mature viral genome can release the viral DNA and capsid protein into the nucleoplasm. Immature capsids get stuck in the basket. Capsids encapsulate the pre-genomic RNA and the P protein. Pre-genomic RNA is reverse-transcribed into DNA while the capsid is still in the cytoplasm. The capsid can then either be directed to the nucleus, providing more genomes for transcription, or bud through the endoplasmic reticulum to provide new virions. This is Capsid protein from Homo sapiens (Human).